A 281-amino-acid chain; its full sequence is Non-selective voltage-gated ion channel 2 (281 aa).

ATP is bound by residues arginine 11 and arginine 19.

It belongs to the eukaryotic mitochondrial porin family.

Its subcellular location is the mitochondrion outer membrane. In terms of biological role, non-selective voltage-gated ion channel that mediates the transport of anions and cations through the mitochondrion outer membrane. The channel adopts an open conformation at low or zero membrane potential and a closed conformation at potentials above 30-40 mV. The open state has a weak anion selectivity whereas the closed state is cation-selective. Does not confer permeability to NADH. Its function is as follows. Catalyzes the scrambling of phospholipids across the outer mitochondrial membrane; the mechanism is unrelated to channel activity and is capable of translocating both anionic and zwitterionic phospholipids. The protein is Non-selective voltage-gated ion channel 2 (POR2) of Saccharomyces cerevisiae (strain ATCC 204508 / S288c) (Baker's yeast).